The following is a 633-amino-acid chain: Extracellular metalloproteinase 3 (633 aa).

Positions 1–18 are cleaved as a signal peptide; sequence MHGLLLAGLLALPMNVLA. Residues 19–246 constitute a propeptide that is removed on maturation; it reads HPAEQHASNV…VHNVVDYVAS (228 aa). Asparagine 410 carries an N-linked (GlcNAc...) asparagine glycan. Zn(2+) is bound at residue histidine 429. Glutamate 430 is a catalytic residue. Residue histidine 433 coordinates Zn(2+). Residues asparagine 480 and asparagine 622 are each glycosylated (N-linked (GlcNAc...) asparagine).

This sequence belongs to the peptidase M36 family. It depends on Zn(2+) as a cofactor.

The protein resides in the secreted. Its function is as follows. Secreted metalloproteinase probably acting as a virulence factor. The sequence is that of Extracellular metalloproteinase 3 (MEP3) from Trichophyton equinum (Horse ringworm fungus).